A 430-amino-acid chain; its full sequence is Aspartate aminotransferase, mitochondrial (430 aa).

A mitochondrion-targeting transit peptide spans 1 to 29 (MALLHSGRVLSGIAAAFHPGLAAAASARA). Phosphothreonine is present on T48. K59 carries the post-translational modification N6-acetyllysine. Substrate is bound at residue G65. N6-acetyllysine; alternate is present on K73. K73 is modified (N6-succinyllysine; alternate). K82 bears the N6-acetyllysine mark. An N6-acetyllysine; alternate modification is found at K90. An N6-succinyllysine; alternate modification is found at K90. Y96 bears the 3'-nitrotyrosine; alternate mark. Phosphotyrosine; alternate is present on Y96. An N6-acetyllysine; alternate mark is found at K107 and K122. Residues K107 and K122 each carry the N6-succinyllysine; alternate modification. Residue S143 is modified to Phosphoserine. K159 is modified (N6-acetyllysine; alternate). The residue at position 159 (K159) is an N6-succinyllysine; alternate. Substrate is bound at residue W162. Residue K185 is modified to N6-acetyllysine; alternate. Residue K185 is modified to N6-succinyllysine; alternate. N215 serves as a coordination point for substrate. N6-succinyllysine is present on K227. N6-acetyllysine is present on K234. N6-acetyllysine; alternate is present on residues K279 and K296. K279 is modified (N6-(pyridoxal phosphate)lysine; alternate). At K296 the chain carries N6-succinyllysine; alternate. K302 carries the N6-acetyllysine modification. K309 is subject to N6-acetyllysine; alternate. At K309 the chain carries N6-succinyllysine; alternate. R313 carries the post-translational modification Asymmetric dimethylarginine. T333 carries the phosphothreonine modification. An N6-acetyllysine; alternate modification is found at K338. Residue K338 is modified to N6-succinyllysine; alternate. K345 is modified (N6-acetyllysine). At K363 the chain carries N6-acetyllysine; alternate. At K363 the chain carries N6-succinyllysine; alternate. N6-acetyllysine occurs at positions 364 and 387. N6-acetyllysine; alternate occurs at positions 396 and 404. 2 positions are modified to N6-succinyllysine; alternate: K396 and K404. R407 serves as a coordination point for substrate.

The protein belongs to the class-I pyridoxal-phosphate-dependent aminotransferase family. Homodimer. The cofactor is pyridoxal 5'-phosphate.

It localises to the mitochondrion matrix. Its subcellular location is the cell membrane. The catalysed reaction is L-aspartate + 2-oxoglutarate = oxaloacetate + L-glutamate. It carries out the reaction L-kynurenine + 2-oxoglutarate = kynurenate + L-glutamate + H2O. In terms of biological role, catalyzes the irreversible transamination of the L-tryptophan metabolite L-kynurenine to form kynurenic acid (KA). As a member of the malate-aspartate shuttle, it has a key role in the intracellular NAD(H) redox balance. Is important for metabolite exchange between mitochondria and cytosol, and for amino acid metabolism. Facilitates cellular uptake of long-chain free fatty acids. The protein is Aspartate aminotransferase, mitochondrial (GOT2) of Macaca fascicularis (Crab-eating macaque).